The primary structure comprises 261 residues: Putative hydro-lyase VSAL_I1435 (261 aa).

The protein belongs to the D-glutamate cyclase family.

The polypeptide is Putative hydro-lyase VSAL_I1435 (Aliivibrio salmonicida (strain LFI1238) (Vibrio salmonicida (strain LFI1238))).